Here is a 124-residue protein sequence, read N- to C-terminus: Cytochrome b5-like protein (124 aa).

The chain crosses the membrane as a helical span at residues 5–22 (YLLILIIIYVIKIICRYF). Residues 49 to 124 (NQINQVNQVN…ILSKYKITEK (76 aa)) enclose the Cytochrome b5 heme-binding domain. Heme is bound by residues His-84 and His-108.

Belongs to the cytochrome b5 family.

It is found in the membrane. Its function is as follows. Membrane bound hemoprotein which function as an electron carrier for several membrane bound oxygenases. The protein is Cytochrome b5-like protein of Acanthamoeba polyphaga (Amoeba).